Consider the following 284-residue polypeptide: L-ribulose-5-phosphate 3-epimerase UlaE (284 aa).

This sequence belongs to the L-ribulose-5-phosphate 3-epimerase family.

It carries out the reaction L-ribulose 5-phosphate = L-xylulose 5-phosphate. It participates in cofactor degradation; L-ascorbate degradation; D-xylulose 5-phosphate from L-ascorbate: step 3/4. Functionally, catalyzes the isomerization of L-xylulose-5-phosphate to L-ribulose-5-phosphate. Is involved in the anaerobic L-ascorbate utilization. The protein is L-ribulose-5-phosphate 3-epimerase UlaE of Escherichia coli O17:K52:H18 (strain UMN026 / ExPEC).